The primary structure comprises 279 residues: Ultraviolet N-glycosylase/AP lyase (279 aa).

One can recognise a HhH domain in the interval 123–142; sequence LEDLVALPGVGRKTAFVVLG. Residues Cys203, Cys210, Cys213, and Cys219 each contribute to the [4Fe-4S] cluster site. Positions 256-279 are disordered; sequence TAGAAGPRPRAGGXAPGLPAQPFR.

It belongs to the Nth/MutY family. It depends on [4Fe-4S] cluster as a cofactor.

Functionally, DNA repair enzyme that has both DNA N-glycosylase activity and AP-lyase activity. Initiates repair at cis-syn pyrimidine dimers. Proceeds via an imino enzyme:DNA intermediate. The protein is Ultraviolet N-glycosylase/AP lyase (pdg) of Micrococcus luteus (strain ATCC 4698 / DSM 20030 / JCM 1464 / CCM 169 / CCUG 5858 / IAM 1056 / NBRC 3333 / NCIMB 9278 / NCTC 2665 / VKM Ac-2230) (Micrococcus lysodeikticus).